A 341-amino-acid polypeptide reads, in one-letter code: Trimethylamine N-oxide transport system ATP-binding protein TmoW (341 aa).

The ABC transporter domain occupies 6-265; that stretch reads IKCESVYKIF…PATEYVRKFT (260 aa). Residue 61-68 coordinates ATP; it reads GLSGSGKS.

Belongs to the ABC transporter superfamily. As to quaternary structure, the complex is probably composed of two ATP-binding proteins (TmoW), two transmembrane proteins (TmoV) and a solute-binding protein (TmoX).

It is found in the cell inner membrane. The catalysed reaction is a quaternary ammonium(out) + ATP + H2O = a quaternary ammonium(in) + ADP + phosphate + H(+). Functionally, part of the ABC transporter complex TmoXWV involved in trimethylamine N-oxide (TMAO) import. Responsible for energy coupling to the transport system. The protein is Trimethylamine N-oxide transport system ATP-binding protein TmoW of Pelagibacter ubique (strain HTCC1062).